The chain runs to 217 residues: Orotidine 5'-phosphate decarboxylase (217 aa).

Substrate is bound by residues Asp14, Lys36, 64 to 73 (DFKVADIPST), Ser120, 172 to 182 (PGVGAQGGNLS), Gly197, and Arg198. Lys66 (proton donor) is an active-site residue.

Belongs to the OMP decarboxylase family. Type 1 subfamily. Homodimer.

The catalysed reaction is orotidine 5'-phosphate + H(+) = UMP + CO2. It participates in pyrimidine metabolism; UMP biosynthesis via de novo pathway; UMP from orotate: step 2/2. Functionally, catalyzes the decarboxylation of orotidine 5'-monophosphate (OMP) to uridine 5'-monophosphate (UMP). The polypeptide is Orotidine 5'-phosphate decarboxylase (Methanococcus maripaludis (strain C6 / ATCC BAA-1332)).